The sequence spans 162 residues: Phosphopantetheine adenylyltransferase (162 aa).

Serine 11 is a binding site for substrate. Residues 11-12 (SF) and histidine 19 contribute to the ATP site. Substrate contacts are provided by lysine 43, leucine 75, and arginine 89. Residues 90–92 (GLR), glutamate 100, and 125–131 (FSYISSS) each bind ATP.

The protein belongs to the bacterial CoaD family. As to quaternary structure, homohexamer. The cofactor is Mg(2+).

The protein localises to the cytoplasm. It carries out the reaction (R)-4'-phosphopantetheine + ATP + H(+) = 3'-dephospho-CoA + diphosphate. The protein operates within cofactor biosynthesis; coenzyme A biosynthesis; CoA from (R)-pantothenate: step 4/5. Its function is as follows. Reversibly transfers an adenylyl group from ATP to 4'-phosphopantetheine, yielding dephospho-CoA (dPCoA) and pyrophosphate. The protein is Phosphopantetheine adenylyltransferase of Petrotoga mobilis (strain DSM 10674 / SJ95).